The following is a 603-amino-acid chain: Alpha-1,2-mannosyltransferase algn-9 (603 aa).

The tract at residues Met1–Ser25 is disordered. The Lumenal segment spans residues Met1–Ser108. Residues Tyr109 to Thr129 traverse the membrane as a helical segment. Lys130 is a topological domain (cytoplasmic). A helical membrane pass occupies residues Ile131–Tyr151. Residues Ala152 to Arg166 are Lumenal-facing. A helical membrane pass occupies residues Phe167–Pro187. At Ser188 to Thr195 the chain is on the cytoplasmic side. A helical membrane pass occupies residues Phe196–Phe216. Topologically, residues Ser217–Thr218 are lumenal. A helical membrane pass occupies residues Met219–Leu239. Residues Lys240–Arg245 are Cytoplasmic-facing. A helical transmembrane segment spans residues Phe246–Ser266. Residues His267–Asn310 lie on the Lumenal side of the membrane. The chain crosses the membrane as a helical span at residues Ile311–Trp331. The Cytoplasmic segment spans residues Met332–Arg343. Residues Phe344–Gln364 traverse the membrane as a helical segment. The Lumenal portion of the chain corresponds to Ala365–Arg370. A helical transmembrane segment spans residues Phe371–Asn391. Over Arg392–Lys397 the chain is Cytoplasmic. A helical membrane pass occupies residues Leu398–Ser418. Topologically, residues Arg419–Leu603 are lumenal. A glycan (N-linked (GlcNAc...) asparagine) is linked at Asn443.

The protein belongs to the glycosyltransferase 22 family.

The protein resides in the endoplasmic reticulum membrane. The enzyme catalyses an alpha-D-Man-(1-&gt;2)-alpha-D-Man-(1-&gt;2)-alpha-D-Man-(1-&gt;3)-[alpha-D-Man-(1-&gt;3)-alpha-D-Man-(1-&gt;6)]-beta-D-Man-(1-&gt;4)-beta-D-GlcNAc-(1-&gt;4)-alpha-D-GlcNAc-diphospho-di-trans,poly-cis-dolichol + a di-trans,poly-cis-dolichyl beta-D-mannosyl phosphate = an alpha-D-Man-(1-&gt;2)-alpha-D-Man-(1-&gt;2)-alpha-D-Man-(1-&gt;3)-[alpha-D-Man-(1-&gt;2)-alpha-D-Man-(1-&gt;3)-alpha-D-Man-(1-&gt;6)]-beta-D-Man-(1-&gt;4)-beta-D-GlcNAc-(1-&gt;4)-alpha-D-GlcNAc-diphospho-di-trans,poly-cis-dolichol + a di-trans,poly-cis-dolichyl phosphate + H(+). It catalyses the reaction an alpha-D-Man-(1-&gt;2)-alpha-D-Man-(1-&gt;2)-alpha-D-Man-(1-&gt;3)-[alpha-D-Man-(1-&gt;2)-alpha-D-Man-(1-&gt;3)-[alpha-D-Man-(1-&gt;6)]-alpha-D-Man-(1-&gt;6)]-beta-D-Man-(1-&gt;4)-beta-D-GlcNAc-(1-&gt;4)-alpha-D-GlcNAc-diphospho-di-trans,poly-cis-dolichol + a di-trans,poly-cis-dolichyl beta-D-mannosyl phosphate = an alpha-D-Man-(1-&gt;2)-alpha-D-Man-(1-&gt;2)-alpha-D-Man-(1-&gt;3)-[alpha-D-Man-(1-&gt;2)-alpha-D-Man-(1-&gt;3)-[alpha-D-Man-(1-&gt;2)-alpha-D-Man-(1-&gt;6)]-alpha-D-Man-(1-&gt;6)]-beta-D-Man-(1-&gt;4)-beta-D-GlcNAc-(1-&gt;4)-alpha-D-GlcNAc-diphospho-di-trans,poly-cis-dolichol + a di-trans,poly-cis-dolichyl phosphate + H(+). The protein operates within protein modification; protein glycosylation. Functionally, catalyzes the transfer of mannose from Dol-P-Man to lipid-linked oligosaccharides. This Caenorhabditis elegans protein is Alpha-1,2-mannosyltransferase algn-9.